Here is a 248-residue protein sequence, read N- to C-terminus: Triosephosphate isomerase (248 aa).

9-11 (NWK) lines the substrate pocket. The active-site Electrophile is the His95. Catalysis depends on Glu166, which acts as the Proton acceptor. Substrate-binding positions include Gly172, Ser210, and 231–232 (GG).

The protein belongs to the triosephosphate isomerase family. Homodimer.

Its subcellular location is the cytoplasm. It catalyses the reaction D-glyceraldehyde 3-phosphate = dihydroxyacetone phosphate. It participates in carbohydrate biosynthesis; gluconeogenesis. Its pathway is carbohydrate degradation; glycolysis; D-glyceraldehyde 3-phosphate from glycerone phosphate: step 1/1. Functionally, involved in the gluconeogenesis. Catalyzes stereospecifically the conversion of dihydroxyacetone phosphate (DHAP) to D-glyceraldehyde-3-phosphate (G3P). This chain is Triosephosphate isomerase, found in Delftia acidovorans (strain DSM 14801 / SPH-1).